We begin with the raw amino-acid sequence, 194 residues long: Large ribosomal subunit protein bL9 (194 aa).

It belongs to the bacterial ribosomal protein bL9 family.

Its function is as follows. Binds to the 23S rRNA. The sequence is that of Large ribosomal subunit protein bL9 from Rhodopseudomonas palustris (strain BisA53).